The primary structure comprises 669 residues: Potassium voltage-gated channel subfamily KQT member 1 (669 aa).

Residues M1–W120 are Cytoplasmic-facing. S27 carries the phosphoserine; by PKA modification. A helical transmembrane segment spans residues K121–L142. At S143–T153 the chain is on the extracellular side. A helical transmembrane segment spans residues G154 to W176. The Cytoplasmic portion of the chain corresponds to S177–R192. Residues F193–K218 form a helical membrane-spanning segment. Residues G219 to A226 are Extracellular-facing. A helical; Voltage-sensor membrane pass occupies residues I227–D242. The tract at residues M238–G246 is interaction with KCNE3. At R243–Q260 the chain is on the cytoplasmic side. Q244 contributes to the a 1,2-diacyl-sn-glycero-3-phospho-(1D-myo-inositol-4,5-bisphosphate) binding site. A helical transmembrane segment spans residues E261–A283. At E284–Y299 the chain is on the extracellular side. An N-linked (GlcNAc...) asparagine glycan is attached at N289. An intramembrane region (pore-forming) is located at residues A300 to P320. Topologically, residues Q321–T322 are extracellular. A helical membrane pass occupies residues W323–G348. At S349–S669 the chain is on the cytoplasmic side. An interaction with CALM region spans residues A370 to Y382. Phosphoserine is present on residues S407 and S409. The segment at K515–F529 is interaction with CALM; calcium-dependent. The interaction with KCNE1 C-terminus stretch occupies residues P535–L572. Positions S585–Q621 form a coiled coil. The interaction with AKAP9 stretch occupies residues I588–L616. The segment at G589–Q620 is C-terminal assembly domain (tetramerization).

Belongs to the potassium channel family. KQT (TC 1.A.1.15) subfamily. Kv7.1/KCNQ1 sub-subfamily. In terms of assembly, tetramer. Heterotetramer with KCNE1; targets to the membrane raft. Interacts (via C-terminus) with CALM; forms a heterooctameric structure (with 4:4 KCNQ1:CALM stoichiometry) in a calcium-independent manner. Interacts with AKAP9; targets protein kinase A (PKA) catalytic and regulatory subunits and protein phosphatase 1 (PP1) to the KCNQ1-KCNE1 complex, allowing PKA-mediated phosphorylation and increase of delayed rectifier potassium channel activity. Interacts with KCNE2; form a heterooligomer complex that targets to the membrane raft and leading to currents with an apparently instantaneous activation, a rapid deactivation process and a linear current-voltage relationship and decreases the amplitude of the outward current. Interacts with AP2M1; mediates estrogen-induced internalization via clathrin-coated vesicles. Interacts with NEDD4L; promotes internalization and decreases I(Ks) currents. Interacts with USP2; counteracts the NEDD4L-specific down-regulation of I(Ks) and restore plasma membrane localization. Heterotetramer with KCNQ5; has a voltage-gated potassium channel activity. Interacts with KCNE3; produces a current with nearly instantaneous activation with a linear current-voltage relationship and alters membrane raft localization. Interacts with KCNE4; impairs KCNQ1 localization in lipid rafts and inhibits voltage-gated potassium channel activity. Interacts with KCNE5; impairs KCNQ1 localization in lipid rafts and only conducts current upon strong and continued depolarization. Interacts with SLC5A3; forms coregulatory channel-transporter complexes that modulate Na(+)-coupled myo-inositol influx through the transporter. Post-translationally, phosphorylation at Ser-27 by PKA; increases delayed rectifier potassium channel activity of the KCNQ1-KCNE1 complex through a macromolecular complex that includes PKA, PP1, and the targeting protein AKAP9. Ubiquitinated by NEDD4L; promotes internalization. The ubiquitinylated form is internalized through a clathrin-mediated endocytosis by interacting with AP2M1 and is recycled back to the cell membrane via RAB4A and RAB11A. In terms of processing, deubiquitinated by USP2; counteracts the NEDD4L-specific down-regulation of I(Ks) and restores the membrane localization.

The protein resides in the cell membrane. Its subcellular location is the cytoplasmic vesicle membrane. It localises to the early endosome. It is found in the membrane raft. The protein localises to the endoplasmic reticulum. The protein resides in the basolateral cell membrane. Its subcellular location is the apical cell membrane. It carries out the reaction K(+)(in) = K(+)(out). With respect to regulation, PIP2 molecule is essential to activate KCNQ channels by inducing the coupling of the voltage-sensing domain (VSD) and the pore-forming domain (PD). Upon channel activation, PIP2 disrupts the VSD-calmodulin/CALM interactions, causing the release of CALM from the VSD which triggers the opening of the gate. Calcium potentiates KCNQ1 channel current through calcium-bound CALM. Calcium-bound CALM competes with PIP2 to stabilize the channel open state. Pore-forming subunit of the voltage-gated potassium (Kv) channel involved in the regulation of cardiomyocyte excitability and important in normal development and functions of myocardium, inner ear, stomach and colon. Associates with KCNE beta subunits that modulates current kinetics. Induces a voltage-dependent by rapidly activating and slowly deactivating potassium-selective outward current. Also promotes a delayed voltage activated potassium current showing outward rectification characteristic. During beta-adrenergic receptor stimulation participates in cardiac repolarization by associating with KCNE1 to form the I(Ks) cardiac potassium current that increases the amplitude and slows down the activation kinetics of outward potassium current I(Ks). Muscarinic agonist oxotremorine-M strongly suppresses KCNQ1/KCNE1 current. When associated with KCNE3, forms the potassium channel that is important for cyclic AMP-stimulated intestinal secretion of chloride ions. This interaction with KCNE3 is reduced by 17beta-estradiol, resulting in the reduction of currents. During conditions of increased substrate load, maintains the driving force for proximal tubular and intestinal sodium ions absorption, gastric acid secretion, and cAMP-induced jejunal chloride ions secretion. Allows the provision of potassium ions to the luminal membrane of the secretory canaliculus in the resting state as well as during stimulated acid secretion. When associated with KCNE2, forms a heterooligomer complex leading to currents with an apparently instantaneous activation, a rapid deactivation process and a linear current-voltage relationship and decreases the amplitude of the outward current. When associated with KCNE4, inhibits voltage-gated potassium channel activity. When associated with KCNE5, this complex only conducts current upon strong and continued depolarization. Also forms a heterotetramer with KCNQ5 that has a voltage-gated potassium channel activity. Binds with phosphatidylinositol 4,5-bisphosphate. KCNQ1-KCNE2 channel associates with Na(+)-coupled myo-inositol symporter in the apical membrane of choroid plexus epithelium and regulates the myo-inositol gradient between blood and cerebrospinal fluid with an impact on neuron excitability. This Rattus norvegicus (Rat) protein is Potassium voltage-gated channel subfamily KQT member 1.